An 85-amino-acid chain; its full sequence is MIEDPSKKISLWQKWINVDPKKRILFSLGLFALSASALYIDQMDPDTNPFKIDRKDVTYKTIDYSKPVGQGRVTIVRNGEIIKEE.

Residues 1–35 (MIEDPSKKISLWQKWINVDPKKRILFSLGLFALSA) form the signal peptide.

It localises to the secreted. This is an uncharacterized protein from Dictyostelium discoideum (Social amoeba).